The sequence spans 274 residues: NH(3)-dependent NAD(+) synthetase (274 aa).

46–53 (GISGGQDS) contributes to the ATP binding site. Asp52 lines the Mg(2+) pocket. Residue Arg140 participates in deamido-NAD(+) binding. Thr160 contributes to the ATP binding site. Glu165 provides a ligand contact to Mg(2+). The deamido-NAD(+) site is built by Lys173 and Asp180. ATP-binding residues include Lys189 and Thr211. Deamido-NAD(+) is bound at residue 260–261 (HK).

It belongs to the NAD synthetase family. In terms of assembly, homodimer.

The enzyme catalyses deamido-NAD(+) + NH4(+) + ATP = AMP + diphosphate + NAD(+) + H(+). Its pathway is cofactor biosynthesis; NAD(+) biosynthesis; NAD(+) from deamido-NAD(+) (ammonia route): step 1/1. Functionally, catalyzes the ATP-dependent amidation of deamido-NAD to form NAD. Uses ammonia as a nitrogen source. The sequence is that of NH(3)-dependent NAD(+) synthetase from Streptococcus equi subsp. equi (strain 4047).